Consider the following 141-residue polypeptide: Cytochrome c-type biogenesis protein CcmE (141 aa).

Topologically, residues 1 to 7 (MQRKHKR) are cytoplasmic. Residues 8–28 (ILFVAVSFIALGCVSAFVLFE) traverse the membrane as a helical; Signal-anchor for type II membrane protein segment. Over 29–141 (LSKSISFFCT…SSDAAVIGSS (113 aa)) the chain is Periplasmic. Histidine 121 and tyrosine 125 together coordinate heme.

Belongs to the CcmE/CycJ family.

The protein resides in the cell inner membrane. Functionally, heme chaperone required for the biogenesis of c-type cytochromes. Transiently binds heme delivered by CcmC and transfers the heme to apo-cytochromes in a process facilitated by CcmF and CcmH. The chain is Cytochrome c-type biogenesis protein CcmE from Anaplasma phagocytophilum (strain HZ).